Here is a 316-residue protein sequence, read N- to C-terminus: Calumenin-B (316 aa).

Positions 1 to 19 (MELRPLVMCFALCVVYASS) are cleaved as a signal peptide. 6 EF-hand domains span residues 69-104 (ESKERLGMLVERIDEDKDGYVSVEEMKKWIKHSQKR), 105-140 (WIYDDVDRQWKGHDHNGDGLVSWEEYKNATYGYILD), 152-187 (QMISRDERRFKMSDLDADLKANKEEFTAFLHPEEYD), 189-224 (MKDIVVLETMEDIDKNGDGFIDLEEYIGDMYNQEGD), 230-265 (WVRTEREQFTEFRDTNKDGRMDKEETKDWILPSDYD), and 266-301 (HAEAEAKHLVYESDNDKDGKLTKAEIVEKYDLFVGS). 9 residues coordinate Ca(2+): D82, D84, D86, Y88, E93, D118, N120, D122, and E129. An N-linked (GlcNAc...) asparagine glycan is attached at N132. Residues D165, D167, D169, K171, E176, D202, N204, D206, E213, D243, N245, D247, R249, E254, D279, D281, D283, K285, and E290 each coordinate Ca(2+). A Prevents secretion from ER motif is present at residues 313–316 (HDEF).

This sequence belongs to the CREC family. Interacts with ggcx.

It localises to the endoplasmic reticulum membrane. The protein resides in the golgi apparatus. The protein localises to the secreted. It is found in the melanosome. Its subcellular location is the sarcoplasmic reticulum lumen. Its function is as follows. Involved in regulation of vitamin K-dependent carboxylation of multiple N-terminal glutamate residues. Seems to inhibit gamma-carboxylase ggcx. Binds 7 calcium ions with a low affinity. This is Calumenin-B (calub) from Salmo salar (Atlantic salmon).